We begin with the raw amino-acid sequence, 412 residues long: Phosphoglycerate kinase (412 aa).

Substrate is bound by residues 26–28 (DFN), Arg-42, 65–68 (HLGR), Arg-133, and Arg-166. Residues Lys-217, Gly-308, Glu-339, and 368-371 (GGDS) each bind ATP.

It belongs to the phosphoglycerate kinase family. Monomer.

Its subcellular location is the cytoplasm. It carries out the reaction (2R)-3-phosphoglycerate + ATP = (2R)-3-phospho-glyceroyl phosphate + ADP. It participates in carbohydrate degradation; glycolysis; pyruvate from D-glyceraldehyde 3-phosphate: step 2/5. In Synechococcus sp. (strain JA-3-3Ab) (Cyanobacteria bacterium Yellowstone A-Prime), this protein is Phosphoglycerate kinase.